We begin with the raw amino-acid sequence, 546 residues long: CTP synthase (546 aa).

The segment at 1 to 269 (MNPNTKIIFV…DAKLVELLNL (269 aa)) is amidoligase domain. Ser-16 provides a ligand contact to CTP. Ser-16 contacts UTP. ATP-binding positions include 17–22 (SLGKGV) and Asp-74. The Mg(2+) site is built by Asp-74 and Glu-143. CTP is bound by residues 150–152 (DIE), 190–195 (KTKPTQ), and Lys-226. Residues 190–195 (KTKPTQ) and Lys-226 contribute to the UTP site. One can recognise a Glutamine amidotransferase type-1 domain in the interval 294 to 546 (TIAMVGKYVS…IHAAVEKSNK (253 aa)). An L-glutamine-binding site is contributed by Gly-356. The Nucleophile; for glutamine hydrolysis role is filled by Cys-383. Residues 384–387 (LGMQ), Glu-407, and Arg-474 contribute to the L-glutamine site. Residues His-519 and Glu-521 contribute to the active site.

The protein belongs to the CTP synthase family. Homotetramer.

The catalysed reaction is UTP + L-glutamine + ATP + H2O = CTP + L-glutamate + ADP + phosphate + 2 H(+). It carries out the reaction L-glutamine + H2O = L-glutamate + NH4(+). It catalyses the reaction UTP + NH4(+) + ATP = CTP + ADP + phosphate + 2 H(+). It functions in the pathway pyrimidine metabolism; CTP biosynthesis via de novo pathway; CTP from UDP: step 2/2. With respect to regulation, allosterically activated by GTP, when glutamine is the substrate; GTP has no effect on the reaction when ammonia is the substrate. The allosteric effector GTP functions by stabilizing the protein conformation that binds the tetrahedral intermediate(s) formed during glutamine hydrolysis. Inhibited by the product CTP, via allosteric rather than competitive inhibition. In terms of biological role, catalyzes the ATP-dependent amination of UTP to CTP with either L-glutamine or ammonia as the source of nitrogen. Regulates intracellular CTP levels through interactions with the four ribonucleotide triphosphates. This chain is CTP synthase, found in Francisella philomiragia subsp. philomiragia (strain ATCC 25017 / CCUG 19701 / FSC 153 / O#319-036).